The following is a 483-amino-acid chain: GDP-fucose protein O-fucosyltransferase 3 (483 aa).

Over 1 to 8 the chain is Cytoplasmic; that stretch reads MVRIPRRK. The chain crosses the membrane as a helical; Signal-anchor for type II membrane protein span at residues 9-31; sequence LLPSCLCMTATVFLMVTVQVLVE. Residues 32–483 are Lumenal-facing; it reads LGKFERKKFK…FWALVFKDSF (452 aa). Residues 45–64 form a disordered region; it reads LQDGQKDVEGDPKHLNPLPK. Residues Asn110, Asn168, and Asn318 are each glycosylated (N-linked (GlcNAc...) asparagine). An intrachain disulfide couples Cys389 to Cys392. The N-linked (GlcNAc...) asparagine glycan is linked to Asn468.

It belongs to the glycosyltransferase 10 family.

The protein resides in the endoplasmic reticulum membrane. The enzyme catalyses L-threonyl-[protein] + GDP-beta-L-fucose = 3-O-(alpha-L-fucosyl)-L-threonyl-[protein] + GDP + H(+). It catalyses the reaction L-seryl-[protein] + GDP-beta-L-fucose = 3-O-(alpha-L-fucosyl)-L-seryl-[protein] + GDP + H(+). Its pathway is protein modification; protein glycosylation. Protein O-fucosyltransferase that specifically catalyzes O-fucosylation of serine or threonine residues in EMI domains of target proteins, such as MMRN1, MMRN2 and EMID1. Attaches fucose through an O-glycosidic linkage. O-fucosylation of EMI domain-containing proteins may be required for facilitating protein folding and secretion. May also show alpha-(1,3)-fucosyltransferase activity toward the innermost N-acetyl glucosamine (GlcNAc) residue in biantennary N-glycan acceptors. However, this was tested with a library of synthetic substrates and this activity is unsure in vivo. May be involved in biosynthesis of Lewis X-carrying biantennary N-glycans that regulate neuron stem cell self-renewal during brain development. This is GDP-fucose protein O-fucosyltransferase 3 (Fut10) from Rattus norvegicus (Rat).